Consider the following 722-residue polypeptide: Protein Aster-A (722 aa).

The disordered stretch occupies residues 1 to 62 (MFDTTPHSGR…KSGVSGTLST (62 aa)). A compositionally biased stretch (low complexity) spans 8–18 (SGRSSPSSSPS). In terms of domain architecture, GRAM spans 93–160 (EDFRKLFSKL…KEVTCLKKEK (68 aa)). Positions 256-336 (ISPSGAADHS…DGPTSSLGPL (81 aa)) are disordered. Ser265, Ser269, Ser273, and Ser417 each carry phosphoserine. Residues 369-540 (SGRLLINSVF…ELAKAEKLSL (172 aa)) enclose the VASt domain. Positions 561-600 (LSWRGHRDGPQHPDPDPCTQTSMHTSGSLSSRFSEPSVDQ) are disordered. Positions 565–575 (GHRDGPQHPDP) are enriched in basic and acidic residues. The span at 578-594 (CTQTSMHTSGSLSSRFS) shows a compositional bias: polar residues. The helical transmembrane segment at 609–629 (ALVLISIVLIVLIALNALLFY) threads the bilayer.

As to expression, highly expressed in the brain.

The protein resides in the endoplasmic reticulum membrane. It localises to the cell membrane. The protein localises to the cytoplasmic vesicle. Its subcellular location is the autophagosome. Its function is as follows. Cholesterol transporter that mediates non-vesicular transport of cholesterol from the plasma membrane (PM) to the endoplasmic reticulum (ER). Contains unique domains for binding cholesterol and the PM, thereby serving as a molecular bridge for the transfer of cholesterol from the PM to the ER. Plays a crucial role in cholesterol homeostasis and has the unique ability to localize to the PM based on the level of membrane cholesterol. In lipid-poor conditions localizes to the ER membrane and in response to excess cholesterol in the PM is recruited to the endoplasmic reticulum-plasma membrane contact sites (EPCS) which is mediated by the GRAM domain. At the EPCS, the sterol-binding VASt/ASTER domain binds to the cholesterol in the PM and facilitates its transfer from the PM to ER. May play a role in tumor progression. Plays a role in autophagy regulation and is required for biogenesis of the autophagosome. This function in autophagy requires its cholesterol-transfer activity. The protein is Protein Aster-A of Mus musculus (Mouse).